A 773-amino-acid polypeptide reads, in one-letter code: Beta-D-xylosidase 3 (773 aa).

The first 23 residues, 1-23 (MASRNRALFSVSTLFLCFIVCIS), serve as a signal peptide directing secretion. An N-linked (GlcNAc...) asparagine glycan is attached at N131. D298 is a catalytic residue. N-linked (GlcNAc...) asparagine glycosylation is found at N349, N432, and N770.

It belongs to the glycosyl hydrolase 3 family. As to expression, expressed in flowers and siliques, in the early stage of seed formation and not at seed maturation. Detected exclusively in the endosperm of very young seeds when the embryo is at the globular stage.

It is found in the secreted. Its subcellular location is the extracellular space. The protein resides in the extracellular matrix. It carries out the reaction Hydrolysis of terminal non-reducing alpha-L-arabinofuranoside residues in alpha-L-arabinosides.. In terms of biological role, involved in the hydrolysis of arabinan. Can hydrolyze (1,3)-alpha-, (1,2)-alpha-linked side group residues and non-reducing terminal L-arabinofuranose residues of debranched (1,5)-alpha-L-arabinan backbone. Also acts as a beta-D-xylosidase, releasing D-xylose from arabinoxylan and xylan. This Arabidopsis thaliana (Mouse-ear cress) protein is Beta-D-xylosidase 3 (BXL3).